We begin with the raw amino-acid sequence, 675 residues long: Rho GTPase-activating protein 40 (675 aa).

Disordered regions lie at residues 95–118 and 187–218; these read RDEL…EAES and KMSS…PGGL. Positions 103–116 are enriched in acidic residues; the sequence is SGGNEGQLPEEGEA. The region spanning 323–522 is the Rho-GAP domain; the sequence is VPLDSLLEAD…IMVHYQDLLW (200 aa).

GTPase activator for the Rho-type GTPases by converting them to an inactive GDP-bound state. The sequence is that of Rho GTPase-activating protein 40 from Homo sapiens (Human).